A 318-amino-acid chain; its full sequence is MSVDQTLYSRTPAAMADPTCAGPAAFTAAGAFSQPDLMAFSLREEEPIWGFDTIAPSMASWQGKMEQQTFCNPNMERGLKNTHVRNGQPTPPPFDDKKLQTPMGEMYPVAQYAFNSSPPEYAPPKHRSSLSEQSQTDGYGVSTRRRKASAIDQCEQQQEREKREKFLERNRLAASKCRQKKKEHTKLLETRFREVSNKKGELESEIEHLRSEVLNLKNEMLRHAQCGDEAIKIHLAQMVRLITSKDTPNRDLVSPMRSPEQMAASTPHGLSFGFDGPMQLPSEMGSPLDQRRDSEQSIMTESSYTFSTDDSFEELINV.

The interval 114-157 (FNSSPPEYAPPKHRSSLSEQSQTDGYGVSTRRRKASAIDQCEQQ) is disordered. The interval 160–199 (REKREKFLERNRLAASKCRQKKKEHTKLLETRFREVSNKK) is basic motif. The bZIP domain maps to 160-223 (REKREKFLER…LNLKNEMLRH (64 aa)). Positions 202-216 (LESEIEHLRSEVLNL) are leucine-zipper. A disordered region spans residues 275–301 (DGPMQLPSEMGSPLDQRRDSEQSIMTE).

The protein belongs to the bZIP family. ATF subfamily.

It localises to the nucleus. Functionally, transcription factor that acts as a key player in the regulatory circuit that integrates secondary metabolism and cellular response to oxidative stress. Regulates the genes involved in development and stress response through direct binding to their promoters. This is Basic leucine zipper (bZIP) transcription factor atfB from Aspergillus flavus (strain ATCC 200026 / FGSC A1120 / IAM 13836 / NRRL 3357 / JCM 12722 / SRRC 167).